A 138-amino-acid polypeptide reads, in one-letter code: Small ribosomal subunit protein uS11c (138 aa).

The tract at residues 1–22 is disordered; it reads MAKAIPKISSRRNGRIGSRKGA. Residues 9 to 22 show a composition bias toward basic residues; that stretch reads SSRRNGRIGSRKGA.

The protein belongs to the universal ribosomal protein uS11 family. As to quaternary structure, part of the 30S ribosomal subunit.

It localises to the plastid. The protein localises to the chloroplast. This chain is Small ribosomal subunit protein uS11c, found in Nicotiana tomentosiformis (Tobacco).